Consider the following 534-residue polypeptide: Peptide chain release factor 3 (534 aa).

The 270-residue stretch at 9 to 278 folds into the tr-type G domain; sequence ARRRTFAIIS…FFIEHAPPPQ (270 aa). GTP contacts are provided by residues 18 to 25, 86 to 90, and 140 to 143; these read SHPDAGKT, DTPGH, and NKLD.

Belongs to the TRAFAC class translation factor GTPase superfamily. Classic translation factor GTPase family. PrfC subfamily.

It is found in the cytoplasm. Its function is as follows. Increases the formation of ribosomal termination complexes and stimulates activities of RF-1 and RF-2. It binds guanine nucleotides and has strong preference for UGA stop codons. It may interact directly with the ribosome. The stimulation of RF-1 and RF-2 is significantly reduced by GTP and GDP, but not by GMP. The polypeptide is Peptide chain release factor 3 (Xanthomonas oryzae pv. oryzae (strain PXO99A)).